The chain runs to 658 residues: Non-reducing end beta-L-arabinofuranosidase (658 aa).

Beta-L-arabinofuranose-binding positions include H142, 192–194, H270, and E322; that span reads DGH. E322 acts as the Proton donor/acceptor in catalysis. Residues E338, C340, C417, and C418 each contribute to the Zn(2+) site. The active-site Nucleophile; S-glycosyl-cysteine intermediate is the C417.

Belongs to the glycosyl hydrolase 127 family. In terms of assembly, homodimer in solution. It depends on Zn(2+) as a cofactor.

The enzyme catalyses beta-L-arabinofuranosyl-(1-&gt;2)-beta-L-arabinofuranose + H2O = 2 beta-L-arabinofuranose. Strongly inhibited in the presence of thiol modifiers, suggesting a crucial role for cysteine residues in catalysis. Slightly inhibited by EDTA. Its function is as follows. Beta-L-arabinofuranosidase that removes the beta-L-arabinofuranose residue from the non-reducing end of various substrates, including beta-L-arabinofuranosyl-hydroxyproline (Ara-Hyp), Ara-beta-1,2-Ara-beta-Hyp (Ara(2)-Hyp), Ara-beta-1,2-Ara-beta-1,2-Ara-beta-Hyp (Ara(3)-Hyp), and beta-L-arabinofuranosyl-(1-&gt;2)-1-O-methyl-beta-L-arabinofuranose. In the presence of 1-alkanols, shows transglycosylation activity, retaining the anomeric configuration of the arabinofuranose residue. The protein is Non-reducing end beta-L-arabinofuranosidase of Bifidobacterium longum subsp. longum (strain ATCC 15707 / DSM 20219 / JCM 1217 / NCTC 11818 / E194b).